The sequence spans 503 residues: Glycerol kinase (503 aa).

Position 14 (T14) interacts with ADP. T14, T15, and S16 together coordinate ATP. T14 lines the sn-glycerol 3-phosphate pocket. R18 lines the ADP pocket. Sn-glycerol 3-phosphate is bound by residues R84, E85, Y136, and D246. Glycerol contacts are provided by R84, E85, Y136, D246, and Q247. T268 and G311 together coordinate ADP. ATP is bound by residues T268, G311, Q315, and G412. Positions 412 and 416 each coordinate ADP.

This sequence belongs to the FGGY kinase family. Homotetramer and homodimer (in equilibrium). Heterodimer with EIIA-Glc. Binds 1 zinc ion per glycerol kinase EIIA-Glc dimer. The zinc ion is important for dimerization.

It catalyses the reaction glycerol + ATP = sn-glycerol 3-phosphate + ADP + H(+). It participates in polyol metabolism; glycerol degradation via glycerol kinase pathway; sn-glycerol 3-phosphate from glycerol: step 1/1. With respect to regulation, activity of this regulatory enzyme is affected by several metabolites. Allosterically and non-competitively inhibited by fructose 1,6-bisphosphate (FBP) and unphosphorylated phosphocarrier protein EIIA-Glc (III-Glc), an integral component of the bacterial phosphotransferase (PTS) system. Functionally, key enzyme in the regulation of glycerol uptake and metabolism. Catalyzes the phosphorylation of glycerol to yield sn-glycerol 3-phosphate. This is Glycerol kinase from Klebsiella pneumoniae (strain 342).